The following is a 738-amino-acid chain: Translation initiation factor IF-2 (738 aa).

The segment covering 1-10 has biased composition (polar residues); the sequence is MNSMRISGHQ. The tract at residues 1–150 is disordered; the sequence is MNSMRISGHQ…PTTVRAPVRP (150 aa). The span at 22–102 shows a compositional bias: gly residues; it reads AGGGRGPGNP…GGRGPSGGRG (81 aa). A compositionally biased stretch (basic and acidic residues) spans 103-120; it reads GDGRRREESPTDHEDGRI. Positions 121 to 143 are enriched in low complexity; that stretch reads NRSGRSTSTTTTRTSSTLARPTT. The tr-type G domain occupies 238–405; it reads PRPPVVTIMG…MILLVADLNE (168 aa). Residues 247-254 form a G1 region; the sequence is GHVDHGKT. A GTP-binding site is contributed by 247-254; sequence GHVDHGKT. Residues 272–276 are G2; the sequence is GITQH. Residues 293–296 form a G3 region; it reads DTPG. Residues 293-297 and 347-350 contribute to the GTP site; these read DTPGH and NKID. A G4 region spans residues 347–350; the sequence is NKID. The G5 stretch occupies residues 383–385; it reads SAK.

It belongs to the TRAFAC class translation factor GTPase superfamily. Classic translation factor GTPase family. IF-2 subfamily.

The protein localises to the cytoplasm. Its function is as follows. One of the essential components for the initiation of protein synthesis. Protects formylmethionyl-tRNA from spontaneous hydrolysis and promotes its binding to the 30S ribosomal subunits. Also involved in the hydrolysis of GTP during the formation of the 70S ribosomal complex. The sequence is that of Translation initiation factor IF-2 from Roseiflexus castenholzii (strain DSM 13941 / HLO8).